The sequence spans 294 residues: ATP synthase gamma chain (294 aa).

This sequence belongs to the ATPase gamma chain family. F-type ATPases have 2 components, CF(1) - the catalytic core - and CF(0) - the membrane proton channel. CF(1) has five subunits: alpha(3), beta(3), gamma(1), delta(1), epsilon(1). CF(0) has three main subunits: a, b and c.

It is found in the cell inner membrane. Produces ATP from ADP in the presence of a proton gradient across the membrane. The gamma chain is believed to be important in regulating ATPase activity and the flow of protons through the CF(0) complex. The polypeptide is ATP synthase gamma chain (Campylobacter lari (strain RM2100 / D67 / ATCC BAA-1060)).